Reading from the N-terminus, the 29-residue chain is Phospholemman-like protein (29 aa).

This sequence belongs to the FXYD family. In terms of processing, phosphorylated by protein kinase C.

It localises to the membrane. Functionally, induces a hyperpolarization-activated chloride current when expressed in Xenopus oocytes. The polypeptide is Phospholemman-like protein (Scyliorhinus canicula (Small-spotted catshark)).